We begin with the raw amino-acid sequence, 263 residues long: tRNA uridine(34) hydroxylase (263 aa).

The Rhodanese domain maps to 129–223 (EGREVVTLDT…YFEETDGAFY (95 aa)). The active-site Cysteine persulfide intermediate is the C183.

This sequence belongs to the TrhO family.

It carries out the reaction uridine(34) in tRNA + AH2 + O2 = 5-hydroxyuridine(34) in tRNA + A + H2O. In terms of biological role, catalyzes oxygen-dependent 5-hydroxyuridine (ho5U) modification at position 34 in tRNAs. The sequence is that of tRNA uridine(34) hydroxylase from Delftia acidovorans (strain DSM 14801 / SPH-1).